We begin with the raw amino-acid sequence, 980 residues long: Phosphoenolpyruvate carboxylase (980 aa).

Residues histidine 182 and lysine 625 contribute to the active site.

This sequence belongs to the PEPCase type 1 family. Requires Mg(2+) as cofactor.

It carries out the reaction oxaloacetate + phosphate = phosphoenolpyruvate + hydrogencarbonate. Functionally, forms oxaloacetate, a four-carbon dicarboxylic acid source for the tricarboxylic acid cycle. In Bordetella pertussis (strain Tohama I / ATCC BAA-589 / NCTC 13251), this protein is Phosphoenolpyruvate carboxylase.